We begin with the raw amino-acid sequence, 629 residues long: Chaperone protein HtpG (629 aa).

The a; substrate-binding stretch occupies residues 1 to 343 (MQKQTLSFQA…SSDLPLNVSR (343 aa)). The tract at residues 344–558 (ELLQESRAVK…DGDMSTQLAR (215 aa)) is b. Residues 559–629 (MLKQAGQTVP…YVRRVNALLV (71 aa)) form a c region.

This sequence belongs to the heat shock protein 90 family. As to quaternary structure, homodimer.

The protein resides in the cytoplasm. In terms of biological role, molecular chaperone. Has ATPase activity. This is Chaperone protein HtpG from Polaromonas naphthalenivorans (strain CJ2).